A 205-amino-acid chain; its full sequence is Phosphoenolpyruvate guanylyltransferase (205 aa).

Thr138, Gly154, and Ser157 together coordinate phosphoenolpyruvate.

This sequence belongs to the CofC family.

The catalysed reaction is phosphoenolpyruvate + GTP + H(+) = enolpyruvoyl-2-diphospho-5'-guanosine + diphosphate. Its pathway is cofactor biosynthesis; coenzyme F420 biosynthesis. In terms of biological role, guanylyltransferase that catalyzes the activation of phosphoenolpyruvate (PEP) as enolpyruvoyl-2-diphospho-5'-guanosine, via the condensation of PEP with GTP. It is involved in the biosynthesis of coenzyme F420, a hydride carrier cofactor. This chain is Phosphoenolpyruvate guanylyltransferase, found in Chloroflexus aurantiacus (strain ATCC 29364 / DSM 637 / Y-400-fl).